The primary structure comprises 150 residues: 3-dehydroquinate dehydratase (150 aa).

The Proton acceptor role is filled by tyrosine 23. 3 residues coordinate substrate: asparagine 75, histidine 81, and aspartate 88. The Proton donor role is filled by histidine 101. Substrate-binding positions include 102–103 (LS) and arginine 112.

The protein belongs to the type-II 3-dehydroquinase family. Homododecamer.

The enzyme catalyses 3-dehydroquinate = 3-dehydroshikimate + H2O. Its pathway is metabolic intermediate biosynthesis; chorismate biosynthesis; chorismate from D-erythrose 4-phosphate and phosphoenolpyruvate: step 3/7. In terms of biological role, catalyzes a trans-dehydration via an enolate intermediate. This chain is 3-dehydroquinate dehydratase, found in Pseudomonas savastanoi pv. phaseolicola (strain 1448A / Race 6) (Pseudomonas syringae pv. phaseolicola (strain 1448A / Race 6)).